The primary structure comprises 430 residues: MSAIIDVYAREVLDSRGNPTVEVEVYTEDGGFGRALVPSGASTGEYEAVELRDGDKNRYLGKGVLKAVENVNEIIAPEIIGLEVADQVAIDRKLIELDGTENKSKLGANAILGVSLAVARAAADELGLPLYQYLGGFNAKTLPVPMMNILNGGAHADNNVDIQEFMIMPVGAESFREALRMGAEIFHSLKAVLKAKGYNTAVGDEGGFAPNLKSNEEALQTIIEAIEKAGYKPGEQVMLAMDVASSELYNKEDGKYHLEGEGVVKTSEEMVAWYEELVSKYPIISIEDGLDENDWEGHKLLTERLGKKVQLVGDDLFVTNTKKLAEGIEKGVGNSILIKVNQIGTLTETFDAIEMAKRAGYTAVVSHRSGETEDSTIADIAVATNAGQIKTGAPSRTDRVAKYNQLLRIEDELGHTAIYQGIRSFYNLKK.

Residue Gln163 participates in (2R)-2-phosphoglycerate binding. Catalysis depends on Glu205, which acts as the Proton donor. Mg(2+) contacts are provided by Asp242, Glu287, and Asp314. (2R)-2-phosphoglycerate is bound by residues Lys339, Arg368, Ser369, and Lys390. Catalysis depends on Lys339, which acts as the Proton acceptor.

This sequence belongs to the enolase family. Mg(2+) is required as a cofactor.

The protein localises to the cytoplasm. Its subcellular location is the secreted. It is found in the cell surface. The enzyme catalyses (2R)-2-phosphoglycerate = phosphoenolpyruvate + H2O. The protein operates within carbohydrate degradation; glycolysis; pyruvate from D-glyceraldehyde 3-phosphate: step 4/5. Catalyzes the reversible conversion of 2-phosphoglycerate (2-PG) into phosphoenolpyruvate (PEP). It is essential for the degradation of carbohydrates via glycolysis. The protein is Enolase of Geobacillus kaustophilus (strain HTA426).